The following is a 1036-amino-acid chain: Lethal(2) giant larvae protein homolog 1 (1036 aa).

WD repeat units lie at residues 38 to 71 (SALA…FTGL), 78 to 119 (VTQM…GLSF), 139 to 175 (VTVV…GQTL), 199 to 233 (SLQG…DNVF), 239 to 271 (LESL…GSPP), 289 to 331 (AINK…ETLV), 339 to 373 (VIDF…VLDL), 395 to 473 (TCSA…YKLS), 517 to 592 (QKVA…RMLI), and 601 to 662 (TAVT…LRQS). S662 carries the phosphoserine modification. Over residues 667 to 677 (RKSRVSGKKRT) the composition is skewed to basic residues. Residues 667-688 (RKSRVSGKKRTPAASSKLQEAN) are disordered. Over residues 679-688 (AASSKLQEAN) the composition is skewed to polar residues. 4 WD repeats span residues 722-782 (VRCL…KEVQ), 791-843 (AIAV…VSAK), 848-901 (LTAH…VHYS), and 915-938 (VFTR…SLSA). Residue T957 is modified to Phosphothreonine. 3 positions are modified to phosphoserine: S964, S982, and S989. The segment at 980–1002 (PESCEGSPSSAHSKRADTMEPPE) is disordered.

This sequence belongs to the WD repeat L(2)GL family. In terms of assembly, associated with nonmuscle myosin II heavy chain. Interacts with PRKCI/aPKC, PARD6B/Par-6 and PARD6A. Interacts with STX4A. Interacts with RAB10 (GDP-bound form); the interaction is direct and promotes RAB10 association with membranes and activation through competition with the Rab inhibitor GDI1. Interacts with DCAF1. Phosphorylated by PRKCI on at least one of the following Ser residues: Ser 654, Ser-658, Ser-662, Ser-669 and Ser-672. Phosphorylation is important for appropriated cell polarization.

The protein resides in the early endosome membrane. It localises to the golgi apparatus. It is found in the trans-Golgi network membrane. The protein localises to the golgi apparatus membrane. Its subcellular location is the cell projection. The protein resides in the axon. It localises to the cytoplasm. It is found in the cytoskeleton. In terms of biological role, cortical cytoskeleton protein found in a complex involved in maintaining cell polarity and epithelial integrity. Involved in the regulation of mitotic spindle orientation, proliferation, differentiation and tissue organization of neuroepithelial cells. Involved in axonogenesis through RAB10 activation thereby regulating vesicular membrane trafficking toward the axonal plasma membrane. This is Lethal(2) giant larvae protein homolog 1 (Llgl1) from Mus musculus (Mouse).